Consider the following 217-residue polypeptide: uncharacterized protein (217 aa).

A signal peptide spans 1-32 (MPITKATPLFLRYRLKGFVFLTLLLVQGVFTA). A lipid anchor (N-palmitoyl cysteine) is attached at Cys-33. Residue Cys-33 is the site of S-diacylglycerol cysteine attachment.

The protein belongs to the MG067/MG068/MG395 family.

Its subcellular location is the cell membrane. This is an uncharacterized protein from Mycoplasma pneumoniae (strain ATCC 29342 / M129 / Subtype 1) (Mycoplasmoides pneumoniae).